A 201-amino-acid chain; its full sequence is UPF0637 protein LSEI_1198 (201 aa).

This sequence belongs to the UPF0637 family.

In Lacticaseibacillus paracasei (strain ATCC 334 / BCRC 17002 / CCUG 31169 / CIP 107868 / KCTC 3260 / NRRL B-441) (Lactobacillus paracasei), this protein is UPF0637 protein LSEI_1198.